Here is a 653-residue protein sequence, read N- to C-terminus: J protein JJJ2 (653 aa).

Positions 14 to 78 constitute a J domain; that stretch reads TLYSVLNLKY…KEKMKYDSKL (65 aa). Disordered regions lie at residues 85–308 and 490–512; these read DYSP…SSTE and VSPKPRSVPSKTTPGSSHAEENL. Polar residues-rich tracts occupy residues 161 to 171 and 187 to 200; these read NAKSYQNSKKS and ATSFSNENRNSSSV. The span at 213 to 241 shows a compositional bias: low complexity; it reads SGSAVGSESRISSSGSESSSNVNSATGSS. Residues 298–308 are compositionally biased toward polar residues; that stretch reads PVKTTPNSSTE.

Its subcellular location is the cytoplasm. It is found in the nucleus. This Kluyveromyces lactis (strain ATCC 8585 / CBS 2359 / DSM 70799 / NBRC 1267 / NRRL Y-1140 / WM37) (Yeast) protein is J protein JJJ2 (JJJ2).